The following is a 322-amino-acid chain: Epiphycan (322 aa).

Residues 1-19 (MKTLAGLVLGLVIFDAAVT) form the signal peptide. The O-linked (GalNAc...) threonine glycan is linked to Thr60. An O-linked (Xyl...) (dermatan sulfate) serine glycan is attached at Ser64. Residues 64–101 (SGNRELLTPPPQPEKAQEEEEEEESTPRLIDGSSPQEP) form a disordered region. O-linked (GalNAc...) serine glycosylation occurs at Ser96. Residues 106 to 143 (VLGPHTNEDFPTCLLCTCISTTVYCDDHELDAIPPLPK) enclose the LRRNT domain. Cys118 and Cys130 are oxidised to a cystine. 5 LRR repeats span residues 144–165 (NTAYFYSRFNRIKKINKNDFAS), 168–189 (DLKRIDLTSNLISEIDEDAFRK), 192–213 (QLRELVLRDNKIRQLPELPTTL), 238–258 (DLHHLYLTDNNLDHIPLPLPE), and 259–280 (NLRALHLQNNNILEMHEDTFCN). An intrachain disulfide couples Cys279 to Cys312. N-linked (GlcNAc...) asparagine glycosylation is found at Asn283 and Asn302. The LRR 6 repeat unit spans residues 290 to 310 (ALEDIRLDGNPINLSKTPQAY).

This sequence belongs to the small leucine-rich proteoglycan (SLRP) family. SLRP class III subfamily. In terms of processing, the O-linked polysaccharides on Thr-60 and Ser-96 are probably the mucin type linked to GalNAc. There is one glycosaminoglycan chain, known to be dermatan sulfate, and it is probably the O-glycosylation at Ser-64. Cartilage, ligament, and placenta.

Its subcellular location is the secreted. The protein resides in the extracellular space. It is found in the extracellular matrix. In terms of biological role, may have a role in bone formation and also in establishing the ordered structure of cartilage through matrix organization. This is Epiphycan (EPYC) from Homo sapiens (Human).